Reading from the N-terminus, the 152-residue chain is 3-hydroxyacyl-[acyl-carrier-protein] dehydratase FabZ (152 aa).

His57 is a catalytic residue.

This sequence belongs to the thioester dehydratase family. FabZ subfamily.

Its subcellular location is the cytoplasm. The enzyme catalyses a (3R)-hydroxyacyl-[ACP] = a (2E)-enoyl-[ACP] + H2O. Its function is as follows. Involved in unsaturated fatty acids biosynthesis. Catalyzes the dehydration of short chain beta-hydroxyacyl-ACPs and long chain saturated and unsaturated beta-hydroxyacyl-ACPs. The sequence is that of 3-hydroxyacyl-[acyl-carrier-protein] dehydratase FabZ from Pasteurella multocida (strain Pm70).